The chain runs to 155 residues: Small ribosomal subunit protein uS7c (155 aa).

It belongs to the universal ribosomal protein uS7 family. As to quaternary structure, part of the 30S ribosomal subunit.

It localises to the plastid. Its subcellular location is the chloroplast. Functionally, one of the primary rRNA binding proteins, it binds directly to 16S rRNA where it nucleates assembly of the head domain of the 30S subunit. This Pinus koraiensis (Korean pine) protein is Small ribosomal subunit protein uS7c (rps7).